We begin with the raw amino-acid sequence, 692 residues long: uncharacterized protein (692 aa).

The transit peptide at 1-39 (MLRLPSSMPIVSFPANPNLLINPQPSWPSRRGNSAVVVS) directs the protein to the chloroplast. One can recognise a Protein kinase domain in the interval 189–523 (EISPEPVAAA…RLESLLSESL (335 aa)). Residues 195 to 203 (VAAASLGQV) and Lys-218 each bind ATP. Residue Asp-343 is the Proton acceptor of the active site.

The protein belongs to the protein kinase superfamily. ADCK protein kinase family.

It is found in the plastid. Its subcellular location is the chloroplast. The protein resides in the plastoglobule. This is an uncharacterized protein from Arabidopsis thaliana (Mouse-ear cress).